Reading from the N-terminus, the 350-residue chain is Biotin synthase (350 aa).

The Radical SAM core domain maps to 63–281 (GDIELATLLS…IAVARITMPK (219 aa)). [4Fe-4S] cluster contacts are provided by C78, C82, and C85. C122, C153, C213, and R285 together coordinate [2Fe-2S] cluster.

Belongs to the radical SAM superfamily. Biotin synthase family. As to quaternary structure, homodimer. [4Fe-4S] cluster serves as cofactor. It depends on [2Fe-2S] cluster as a cofactor.

It catalyses the reaction (4R,5S)-dethiobiotin + (sulfur carrier)-SH + 2 reduced [2Fe-2S]-[ferredoxin] + 2 S-adenosyl-L-methionine = (sulfur carrier)-H + biotin + 2 5'-deoxyadenosine + 2 L-methionine + 2 oxidized [2Fe-2S]-[ferredoxin]. It functions in the pathway cofactor biosynthesis; biotin biosynthesis; biotin from 7,8-diaminononanoate: step 2/2. Its function is as follows. Catalyzes the conversion of dethiobiotin (DTB) to biotin by the insertion of a sulfur atom into dethiobiotin via a radical-based mechanism. The sequence is that of Biotin synthase from Acidovorax sp. (strain JS42).